Here is a 304-residue protein sequence, read N- to C-terminus: Non-specific ribonucleoside hydrolase RihC (304 aa).

The active site involves His-233.

This sequence belongs to the IUNH family. RihC subfamily.

Its function is as follows. Hydrolyzes both purine and pyrimidine ribonucleosides with a broad-substrate specificity. In Escherichia coli O8 (strain IAI1), this protein is Non-specific ribonucleoside hydrolase RihC.